The sequence spans 331 residues: Ketol-acid reductoisomerase (NADP(+)) (331 aa).

One can recognise a KARI N-terminal Rossmann domain in the interval A2–T182. NADP(+) contacts are provided by residues Y25–Q28, S51, S53, and D83–Q86. H108 is an active-site residue. Residue G134 coordinates NADP(+). The region spanning N183–L328 is the KARI C-terminal knotted domain. Residues D191, E195, E227, and E231 each contribute to the Mg(2+) site. S252 serves as a coordination point for substrate.

Belongs to the ketol-acid reductoisomerase family. It depends on Mg(2+) as a cofactor.

It catalyses the reaction (2R)-2,3-dihydroxy-3-methylbutanoate + NADP(+) = (2S)-2-acetolactate + NADPH + H(+). The catalysed reaction is (2R,3R)-2,3-dihydroxy-3-methylpentanoate + NADP(+) = (S)-2-ethyl-2-hydroxy-3-oxobutanoate + NADPH + H(+). It functions in the pathway amino-acid biosynthesis; L-isoleucine biosynthesis; L-isoleucine from 2-oxobutanoate: step 2/4. The protein operates within amino-acid biosynthesis; L-valine biosynthesis; L-valine from pyruvate: step 2/4. In terms of biological role, involved in the biosynthesis of branched-chain amino acids (BCAA). Catalyzes an alkyl-migration followed by a ketol-acid reduction of (S)-2-acetolactate (S2AL) to yield (R)-2,3-dihydroxy-isovalerate. In the isomerase reaction, S2AL is rearranged via a Mg-dependent methyl migration to produce 3-hydroxy-3-methyl-2-ketobutyrate (HMKB). In the reductase reaction, this 2-ketoacid undergoes a metal-dependent reduction by NADPH to yield (R)-2,3-dihydroxy-isovalerate. In Parasynechococcus marenigrum (strain WH8102), this protein is Ketol-acid reductoisomerase (NADP(+)).